The sequence spans 410 residues: Protein CNPPD1 (410 aa).

The helical transmembrane segment at 233-253 (CLLAVAYVSSVALAVASVAVI) threads the bilayer.

Belongs to the CNPPD1 family.

The protein localises to the membrane. The polypeptide is Protein CNPPD1 (CNPPD1) (Homo sapiens (Human)).